An 85-amino-acid chain; its full sequence is Large ribosomal subunit protein bL27 (85 aa).

The segment at 1-21 is disordered; the sequence is MAHKKAGGSTRNGRDSNAQRL. Polar residues predominate over residues 9–19; that stretch reads STRNGRDSNAQ.

The protein belongs to the bacterial ribosomal protein bL27 family.

The protein is Large ribosomal subunit protein bL27 of Pectobacterium carotovorum subsp. carotovorum (strain PC1).